Consider the following 119-residue polypeptide: Single-stranded DNA-binding protein (119 aa).

In terms of domain architecture, SSB spans 3–102 (INIVTLVGRV…IRVDQLELLG (100 aa)).

As to quaternary structure, homotetramer.

The protein is Single-stranded DNA-binding protein (ssb1) of Anabaena variabilis.